Consider the following 274-residue polypeptide: Ribonucleoside-diphosphate reductase small chain (274 aa).

Fe cation is bound by residues Asp-70, Glu-101, and His-104. The active site involves Tyr-108. Residues Glu-163, Glu-197, and His-200 each coordinate Fe cation.

Belongs to the ribonucleoside diphosphate reductase small chain family. In terms of assembly, heterodimer of a large and a small chain. Requires Fe cation as cofactor.

The enzyme catalyses a 2'-deoxyribonucleoside 5'-diphosphate + [thioredoxin]-disulfide + H2O = a ribonucleoside 5'-diphosphate + [thioredoxin]-dithiol. In terms of biological role, ribonucleoside-diphosphate reductase holoenzyme provides the precursors necessary for viral DNA synthesis. Allows virus growth in non-dividing cells. Catalyzes the biosynthesis of deoxyribonucleotides from the corresponding ribonucleotides. This is Ribonucleoside-diphosphate reductase small chain from Sus scrofa (Pig).